The primary structure comprises 1500 residues: MRRNQLPIPVFLLLLLLLPRDATAATGKPRYVVLVPSELYAGVPEKVCVHLNHLNETVTLNVTLEYGVQYSNLLIDQAVDKDSSYCSSFTISRPLSPSALIAVEIKGPTHHFIKKKSMWITKAESPVFVQTDKPIYKPGQTVKFRVVSVDISFRPVNETFPVVYIENPKRNRIFQWQNVDLPGGLHQLSFPLSVEPALGIYKVVVQKDSGKKIEHSFEVKEYVLPKFEVQVKMPKTMAFLEEELVVTACGLYTYGKPVPGLVTMKVCRKYTQSYSNCHGQHSKSICEEFSKQADEKGCFRQVVKTKVFQPRQKGYDMKIEVEAKIKEDGTGIELTGTGSCEIANTLSKLKFTKANTFYRPGLPFFGQVLLVDEKGQPIPNKNLTVQVNSVRSQFTFTTDEHGLANILIDTTNFTFSFMGIRVIYKQNNICFDNWWVDEYHTQADHSAARIFSPSRSYIQLELVLGTLACGQTQEIRIHFLLNEDALKDAKDLTFYYLIKARGSIFNSGSHVLPLEQGKVKGVVSFPIRVEPGMAPVAKLIVYTILPNEELIADVQKFDIEKCFANTVNLSFPSAQSLPASDTHLTVKATPLSLCALTAVDQSVLLLKPEAKLSPQSIYNLLPQKAEQGAYLGPLPYKGGENCIKAEDITHNGIVYTPKQDLNDNDAYSVFQSIGLKIFTNTRVHKPRYCPMYQAYPPLPYVGEPQALAMSAIPGAGYRSSNIRTSSMMMMGASEVAQEVEVRETVRKYFPETWIWDMVPLDLSGDGELPVKVPDTITEWKASAFCLSGTTGLGLSSTISHKVFQPFFLELTLPYSVVRGEAFILKATVLNYMPHCIRIHVSLEMSPDFLAVPVGSHEDSHCICGNERKTVSWAVTPKSLGEVNFTATAEALQSPELCGNKVAEVPALVQKDTVVKPVIVEPEGIEKEQTYNTLLCPQDAELQENWTLDLPANVVEGSARATQSVLGDILGSAMQNLQNLLQMPYGCGEQNMVLFVPNIYVLEYLNETQQLTEAIKSKAISYLISGYQRQLNYQHSDGSYSTFGDRGMRHSQGNTWLTAFVLKAFAQAQSYIYIEKTHITNAFNWLSMKQRENGCFQQSGSLLNNAMKGGVDDEVTLSAYITIALLEMPLPVTHSVVRNALFCLETAWASISNSQESHVYTKALLAYAFALAGNRAKRSEVLESLNKDAVNEEESVHWQRPKNVEENVREMRSFSYKPRAPSAEVEMTAYVLLAYLTSASSRPTRDLSSSDLTTASKIVKWISKQQNSHGGFSSTQDTVVALQALSKYGAATFTKSNKEVSVTIESSGTVSGTLHVNNGNRLLLQEVRLADLPGNYITKVSGSGCVYLQTSLKYNILPEAEGEAPFTLKVNTLPLNFDKAEHHRKFQIHINVSYIGERPNSNMVIVDVKMVSGFIPVKPSVKKLQDQSNIQRTEVNTNHVLIYIEKLTNQTMGFSFAVEQDIPVKNLKPAPVKVYDYYETDEFAIEEYSAPFSSDSEQGNA.

The N-terminal stretch at M1–A24 is a signal peptide. Residues C48 and C86 are joined by a disulfide bond. N55, N61, and N157 each carry an N-linked (GlcNAc...) asparagine glycan. 2 cysteine pairs are disulfide-bonded: C249–C298 and C267–C286. Residues N382 and N412 are each glycosylated (N-linked (GlcNAc...) asparagine). The cysteines at positions 469 and 562 are disulfide-linked. N-linked (GlcNAc...) asparagine glycosylation is present at N568. Disulfide bonds link C594-C785, C642-C689, C835-C863, C861-C897, C935-C1344, and C1094-C1142. The segment at P686–R746 is bait region. N883 and N944 each carry an N-linked (GlcNAc...) asparagine glycan. Residues C986–Q989 constitute a cross-link (isoglutamyl cysteine thioester (Cys-Gln)). Residue N1005 is glycosylated (N-linked (GlcNAc...) asparagine). The interval E1360–A1500 is receptor-binding domain. N-linked (GlcNAc...) asparagine glycans are attached at residues N1390 and N1448.

This sequence belongs to the protease inhibitor I39 (alpha-2-macroglobulin) family. In terms of assembly, homotetramer; disulfide-linked. In terms of tissue distribution, widely expressed. Highest level in ovary, testis, uterus and prostate. Protein found in plasma.

Its subcellular location is the secreted. Is able to inhibit all four classes of proteinases by a unique 'trapping' mechanism. This protein has a peptide stretch, called the 'bait region' which contains specific cleavage sites for different proteinases. When a proteinase cleaves the bait region, a conformational change is induced in the protein which traps the proteinase. The entrapped enzyme remains active against low molecular weight substrates (activity against high molecular weight substrates is greatly reduced). Following cleavage in the bait region a thioester bond is hydrolyzed and mediates the covalent binding of the protein to the proteinase. This Rattus norvegicus (Rat) protein is Alpha-1-macroglobulin.